We begin with the raw amino-acid sequence, 337 residues long: uncharacterized protein (337 aa).

Positions 291-314 (NKTRQCSNTKTTTKSTMTPINNGF) are disordered. The span at 299 to 308 (TKTTTKSTMT) shows a compositional bias: low complexity.

This is an uncharacterized protein from Acanthamoeba polyphaga mimivirus (APMV).